The following is a 255-amino-acid chain: Pyrroloquinoline-quinone synthase (255 aa).

Belongs to the PqqC family.

It carries out the reaction 6-(2-amino-2-carboxyethyl)-7,8-dioxo-1,2,3,4,7,8-hexahydroquinoline-2,4-dicarboxylate + 3 O2 = pyrroloquinoline quinone + 2 H2O2 + 2 H2O + H(+). It functions in the pathway cofactor biosynthesis; pyrroloquinoline quinone biosynthesis. Ring cyclization and eight-electron oxidation of 3a-(2-amino-2-carboxyethyl)-4,5-dioxo-4,5,6,7,8,9-hexahydroquinoline-7,9-dicarboxylic-acid to PQQ. This chain is Pyrroloquinoline-quinone synthase, found in Cereibacter sphaeroides (strain ATCC 17025 / ATH 2.4.3) (Rhodobacter sphaeroides).